The chain runs to 166 residues: Large ribosomal subunit protein eL21 (166 aa).

The protein belongs to the eukaryotic ribosomal protein eL21 family. Component of the large ribosomal subunit.

Its subcellular location is the cytoplasm. The protein resides in the cytosol. It localises to the endoplasmic reticulum. Its function is as follows. Component of the large ribosomal subunit. The ribosome is a large ribonucleoprotein complex responsible for the synthesis of proteins in the cell. This is Large ribosomal subunit protein eL21 (RPL21) from Entamoeba histolytica (strain ATCC 30459 / HM-1:IMSS / ABRM).